Reading from the N-terminus, the 123-residue chain is Ribonuclease P protein component 1 (123 aa).

The disordered stretch occupies residues 73–93 (PDNGVGTAFKPAGGETRQTTG).

Belongs to the eukaryotic/archaeal RNase P protein component 1 family. In terms of assembly, consists of a catalytic RNA component and at least 4-5 protein subunits.

The protein localises to the cytoplasm. The enzyme catalyses Endonucleolytic cleavage of RNA, removing 5'-extranucleotides from tRNA precursor.. Functionally, part of ribonuclease P, a protein complex that generates mature tRNA molecules by cleaving their 5'-ends. The sequence is that of Ribonuclease P protein component 1 from Halobacterium salinarum (strain ATCC 29341 / DSM 671 / R1).